Here is a 212-residue protein sequence, read N- to C-terminus: Glycerol-3-phosphate acyltransferase (212 aa).

Transmembrane regions (helical) follow at residues 3 to 23 (ILLAALIAYLIGSVSFAVIVS), 51 to 71 (KAAILTLIGDAFKGWIAVWLA), 78 to 98 (DVAIAWVAIAVFIGHLYPVFF), 115 to 135 (AVHPVLGLATALTWLIIAFFF), and 139 to 159 (SLAALVAAVFAPLFDVFLFGT).

The protein belongs to the PlsY family. Probably interacts with PlsX.

The protein resides in the cell inner membrane. The enzyme catalyses an acyl phosphate + sn-glycerol 3-phosphate = a 1-acyl-sn-glycero-3-phosphate + phosphate. Its pathway is lipid metabolism; phospholipid metabolism. In terms of biological role, catalyzes the transfer of an acyl group from acyl-phosphate (acyl-PO(4)) to glycerol-3-phosphate (G3P) to form lysophosphatidic acid (LPA). This enzyme utilizes acyl-phosphate as fatty acyl donor, but not acyl-CoA or acyl-ACP. The sequence is that of Glycerol-3-phosphate acyltransferase from Burkholderia multivorans (strain ATCC 17616 / 249).